The following is a 492-amino-acid chain: uncharacterized protein (492 aa).

The first 22 residues, 1-22, serve as a signal peptide directing secretion; it reads MIRPNMFALLMLVVLAITSVNA. N-linked (GlcNAc...) asparagine; by host glycans are attached at residues asparagine 92, asparagine 97, asparagine 119, asparagine 146, asparagine 213, asparagine 267, and asparagine 458.

The protein localises to the secreted. This is an uncharacterized protein from Acanthamoeba polyphaga (Amoeba).